The following is a 183-amino-acid chain: Ribonuclease H (183 aa).

The RNase H type-1 domain maps to 2-151; it reads SQARFIAFSD…VDQLAQAAAR (150 aa). Mg(2+) contacts are provided by Asp-11, Glu-57, Asp-79, and Asp-143.

This sequence belongs to the RNase H family. As to quaternary structure, monomer. The cofactor is Mg(2+).

The protein resides in the cytoplasm. The catalysed reaction is Endonucleolytic cleavage to 5'-phosphomonoester.. Endonuclease that specifically degrades the RNA of RNA-DNA hybrids. The sequence is that of Ribonuclease H from Anaeromyxobacter dehalogenans (strain 2CP-C).